The following is an 82-amino-acid chain: Small ribosomal subunit protein uS17 (82 aa).

The protein belongs to the universal ribosomal protein uS17 family. As to quaternary structure, part of the 30S ribosomal subunit.

In terms of biological role, one of the primary rRNA binding proteins, it binds specifically to the 5'-end of 16S ribosomal RNA. This Rhodopseudomonas palustris (strain TIE-1) protein is Small ribosomal subunit protein uS17.